The chain runs to 210 residues: LexA repressor (210 aa).

Positions 30–50 form a DNA-binding region, H-T-H motif; it reads RVEIAREIGFKSPNAAEEHLK. Residues serine 127 and lysine 164 each act as for autocatalytic cleavage activity in the active site.

The protein belongs to the peptidase S24 family. As to quaternary structure, homodimer.

It carries out the reaction Hydrolysis of Ala-|-Gly bond in repressor LexA.. In terms of biological role, represses a number of genes involved in the response to DNA damage (SOS response), including recA and lexA. In the presence of single-stranded DNA, RecA interacts with LexA causing an autocatalytic cleavage which disrupts the DNA-binding part of LexA, leading to derepression of the SOS regulon and eventually DNA repair. This Actinobacillus pleuropneumoniae serotype 5b (strain L20) protein is LexA repressor.